A 1201-amino-acid chain; its full sequence is Vitamin B12-dependent ribonucleotide reductase (1201 aa).

Substrate-binding positions include serine 153, 198–199 (AC), glycine 230, 482–486 (NPCSE), and 683–687 (PTGTI). Cysteine 199 and cysteine 495 form a disulfide bridge. The active-site Proton acceptor is asparagine 482. Cysteine 484 (cysteine radical intermediate) is an active-site residue. Glutamate 486 serves as the catalytic Proton acceptor. Residues 1100 to 1118 (DEIGSKRATAESNGQEKET) are compositionally biased toward basic and acidic residues. Residues 1100–1120 (DEIGSKRATAESNGQEKETLS) are disordered.

Belongs to the ribonucleoside diphosphate reductase class-2 family. It depends on adenosylcob(III)alamin as a cofactor.

It carries out the reaction a 2'-deoxyribonucleoside 5'-diphosphate + [thioredoxin]-disulfide + H2O = a ribonucleoside 5'-diphosphate + [thioredoxin]-dithiol. In terms of biological role, catalyzes the reduction of ribonucleotides to deoxyribonucleotides. May function to provide a pool of deoxyribonucleotide precursors for DNA repair during oxygen limitation and/or for immediate growth after restoration of oxygen. The protein is Vitamin B12-dependent ribonucleotide reductase (nrdJ) of Leptospira interrogans serogroup Icterohaemorrhagiae serovar copenhageni (strain Fiocruz L1-130).